Here is an 89-residue protein sequence, read N- to C-terminus: uncharacterized protein (89 aa).

This is an uncharacterized protein from Treponema pallidum (strain Nichols).